The chain runs to 237 residues: MRPSGRTAQQIRPVTITRNFTKHAEGSVLIEFGETKVLCNASVERGVPRFLKGKGQGWVTAEYSMLPRATHTRSAREASRGKQGGRTLEIQRLIGRSLRTCIDMSALGEHTITIDCDVIQADGGTRTASITGACVALVDALNWMRAQGMVKVNPLKEMVAAISVGILDGEPVSDLEYIEDSKADTDMNIVMTEAGKFIEIQGTAEGEAFSFDEMNSLVEMARHSIRELIDIQKQALA.

Residues Arg86 and 124–126 (GTR) each bind phosphate.

The protein belongs to the RNase PH family. Homohexameric ring arranged as a trimer of dimers.

The enzyme catalyses tRNA(n+1) + phosphate = tRNA(n) + a ribonucleoside 5'-diphosphate. Functionally, phosphorolytic 3'-5' exoribonuclease that plays an important role in tRNA 3'-end maturation. Removes nucleotide residues following the 3'-CCA terminus of tRNAs; can also add nucleotides to the ends of RNA molecules by using nucleoside diphosphates as substrates, but this may not be physiologically important. Probably plays a role in initiation of 16S rRNA degradation (leading to ribosome degradation) during starvation. In Idiomarina loihiensis (strain ATCC BAA-735 / DSM 15497 / L2-TR), this protein is Ribonuclease PH.